The following is a 247-amino-acid chain: 4-hydroxy-tetrahydrodipicolinate reductase (247 aa).

NAD(+) contacts are provided by residues Gly12–Met17, Gly78–Thr80, and Ala102–Phe105. The active-site Proton donor/acceptor is the His136. His137 contacts (S)-2,3,4,5-tetrahydrodipicolinate. Catalysis depends on Lys140, which acts as the Proton donor. Gly146–Thr147 contributes to the (S)-2,3,4,5-tetrahydrodipicolinate binding site.

It belongs to the DapB family.

It localises to the cytoplasm. The catalysed reaction is (S)-2,3,4,5-tetrahydrodipicolinate + NAD(+) + H2O = (2S,4S)-4-hydroxy-2,3,4,5-tetrahydrodipicolinate + NADH + H(+). It catalyses the reaction (S)-2,3,4,5-tetrahydrodipicolinate + NADP(+) + H2O = (2S,4S)-4-hydroxy-2,3,4,5-tetrahydrodipicolinate + NADPH + H(+). Its pathway is amino-acid biosynthesis; L-lysine biosynthesis via DAP pathway; (S)-tetrahydrodipicolinate from L-aspartate: step 4/4. Its function is as follows. Catalyzes the conversion of 4-hydroxy-tetrahydrodipicolinate (HTPA) to tetrahydrodipicolinate. In Acidiphilium cryptum (strain JF-5), this protein is 4-hydroxy-tetrahydrodipicolinate reductase.